The primary structure comprises 254 residues: Isoprenyl transferase (254 aa).

Asp-23 is a catalytic residue. A Mg(2+)-binding site is contributed by Asp-23. Residues 24-27, Trp-28, Arg-36, His-40, and 68-70 contribute to the substrate site; these read GNGR and STE. Asn-71 serves as the catalytic Proton acceptor. Residues Trp-72, Arg-74, Arg-191, and 197–199 each bind substrate; that span reads RIS. Glu-210 provides a ligand contact to Mg(2+).

The protein belongs to the UPP synthase family. As to quaternary structure, homodimer. Mg(2+) serves as cofactor.

Functionally, catalyzes the condensation of isopentenyl diphosphate (IPP) with allylic pyrophosphates generating different type of terpenoids. This is Isoprenyl transferase from Porphyromonas gingivalis (strain ATCC BAA-308 / W83).